The primary structure comprises 506 residues: Maturase K (506 aa).

Belongs to the intron maturase 2 family. MatK subfamily.

It is found in the plastid. The protein localises to the chloroplast. Functionally, usually encoded in the trnK tRNA gene intron. Probably assists in splicing its own and other chloroplast group II introns. The protein is Maturase K of Pisum sativum (Garden pea).